The following is a 514-amino-acid chain: Peptide chain release factor 3 (514 aa).

The region spanning 8–268 is the tr-type G domain; it reads KKRRTFAIIS…TFLEFAPEPH (261 aa). GTP-binding positions include 17–24, 85–89, and 139–142; these read SHPDAGKT, DTPGH, and NKLD.

Belongs to the TRAFAC class translation factor GTPase superfamily. Classic translation factor GTPase family. PrfC subfamily.

Its subcellular location is the cytoplasm. Functionally, increases the formation of ribosomal termination complexes and stimulates activities of RF-1 and RF-2. It binds guanine nucleotides and has strong preference for UGA stop codons. It may interact directly with the ribosome. The stimulation of RF-1 and RF-2 is significantly reduced by GTP and GDP, but not by GMP. The chain is Peptide chain release factor 3 from Streptococcus pyogenes serotype M1.